The primary structure comprises 133 residues: Arginine decarboxylase proenzyme (133 aa).

Serine 81 serves as the catalytic Schiff-base intermediate with substrate; via pyruvic acid. A Pyruvic acid (Ser); by autocatalysis modification is found at serine 81. The active-site Proton acceptor; for processing activity is the histidine 86. The active-site Proton donor; for catalytic activity is cysteine 101.

It belongs to the prokaryotic AdoMetDC family. Type 1 subfamily. As to quaternary structure, heterooctamer of four alpha and four beta chains arranged as a tetramer of alpha/beta heterodimers. The cofactor is pyruvate. Post-translationally, is synthesized initially as an inactive proenzyme. Formation of the active enzyme involves a self-maturation process in which the active site pyruvoyl group is generated from an internal serine residue via an autocatalytic post-translational modification. Two non-identical subunits are generated from the proenzyme in this reaction, and the pyruvate is formed at the N-terminus of the alpha chain, which is derived from the carboxyl end of the proenzyme. The post-translation cleavage follows an unusual pathway, termed non-hydrolytic serinolysis, in which the side chain hydroxyl group of the serine supplies its oxygen atom to form the C-terminus of the beta chain, while the remainder of the serine residue undergoes an oxidative deamination to produce ammonia and the pyruvoyl group blocking the N-terminus of the alpha chain.

The enzyme catalyses L-arginine + H(+) = agmatine + CO2. Its pathway is amine and polyamine biosynthesis; agmatine biosynthesis; agmatine from L-arginine: step 1/1. In terms of biological role, specifically catalyzes the decarboxylation of L-arginine to agmatine. Has no S-adenosylmethionine decarboxylase (AdoMetDC) activity. The protein is Arginine decarboxylase proenzyme of Pyrobaculum arsenaticum (strain DSM 13514 / JCM 11321 / PZ6).